The following is a 345-amino-acid chain: Heat-inducible transcription repressor HrcA (345 aa).

It belongs to the HrcA family.

In terms of biological role, negative regulator of class I heat shock genes (grpE-dnaK-dnaJ and groELS operons). Prevents heat-shock induction of these operons. This Zymomonas mobilis subsp. mobilis (strain ATCC 31821 / ZM4 / CP4) protein is Heat-inducible transcription repressor HrcA.